Reading from the N-terminus, the 663-residue chain is Sodium/potassium/calcium exchanger 1 (663 aa).

The Extracellular portion of the chain corresponds to 32–128 (SPSAIPALLT…DLFSVEERRQ (97 aa)). Residues Asn59, Asn66, and Asn100 are each glycosylated (N-linked (GlcNAc...) asparagine). A helical transmembrane segment spans residues 129–149 (GWVVLHIFGMMYVFVALAIVC). Residues 150–173 (DEYFVPALGVITEKLQISEDVAGA) lie on the Cytoplasmic side of the membrane. The Alpha-1 repeat unit spans residues 170–210 (VAGATFMAAGGSAPELFTSLIGVFISHSNVGIGTIVGSAVF). A helical transmembrane segment spans residues 174-194 (TFMAAGGSAPELFTSLIGVFI). The Extracellular segment spans residues 195–200 (SHSNVG). Residues 201 to 221 (IGTIVGSAVFNILFVIGTCAL) form a helical membrane-spanning segment. The Cytoplasmic segment spans residues 222–228 (FSREILH). A helical membrane pass occupies residues 229-253 (LTWWPLFRDISFYIVDLLMLILFFL). Residues 254-259 (DSVIDW) lie on the Extracellular side of the membrane. A helical transmembrane segment spans residues 260-276 (WESLLLLTAYATYVFTM). Residues 277–471 (KHNVSLEQWV…SLEWPETRKK (195 aa)) are Cytoplasmic-facing. Disordered regions lie at residues 308–343 (KSSV…SLHN) and 384–465 (LTGQ…SLEW). Over residues 316–325 (DGTKPADGKK) the composition is skewed to basic and acidic residues. Polar residues-rich tracts occupy residues 327 to 343 (QPTT…SLHN) and 399 to 412 (ASQN…ASDS). Ser337 bears the Phosphoserine mark. Residues 413–423 (EPSKDKQKEDT) are compositionally biased toward basic and acidic residues. The segment covering 434–461 (DNSEDSSSDSEDDSDDDSTDDEENDEPL) has biased composition (acidic residues). Residues 472–492 (QAIYLFLFPIVFPLWSTIPDV) form a helical membrane-spanning segment. Residues 493 to 499 (RNPDSKK) are Extracellular-facing. Residues 500-520 (FFVITFFGSIIWIAAFSYLMV) form a helical membrane-spanning segment. The Cytoplasmic portion of the chain corresponds to 521–535 (WWAHQVGETIGISEE). Residues 536–556 (IMGLTILAAGTSIPDLITSVI) traverse the membrane as a helical segment. The stretch at 543-574 (AAGTSIPDLITSVIVARKGLGDMAVSSSVGSN) is one Alpha-2 repeat. Topologically, residues 557–574 (VARKGLGDMAVSSSVGSN) are extracellular. The chain crosses the membrane as a helical span at residues 575 to 595 (IFDITVGLPVPWFLYSVFNGF). The Cytoplasmic segment spans residues 596 to 604 (SPVAVSSNG). Residues 605-625 (LFCAIVLLFLMLLFVIISIAL) traverse the membrane as a helical segment. Residues 626-632 (CKWKMNK) are Extracellular-facing. The helical transmembrane segment at 633–653 (ILGVTMFALYFVFLIISVMLE) threads the bilayer. The Cytoplasmic segment spans residues 654–663 (DRIISCPVSV).

It belongs to the Ca(2+):cation antiporter (CaCA) (TC 2.A.19) family. SLC24A subfamily. The uncleaved signal sequence is required for efficient membrane targeting and proper membrane integration and topology. As to expression, retinal rods. Localizes to the inner segment of rod photoreceptors.

It localises to the cell membrane. The catalysed reaction is Ca(2+)(out) + K(+)(out) + 4 Na(+)(in) = Ca(2+)(in) + K(+)(in) + 4 Na(+)(out). In terms of biological role, calcium, potassium:sodium antiporter that transports 1 Ca(2+) and 1 K(+) in exchange for 4 Na(+). Critical component of the visual transduction cascade, controlling the calcium concentration of outer segments during light and darkness. Light causes a rapid lowering of cytosolic free calcium in the outer segment of both retinal rod and cone photoreceptors and the light-induced lowering of calcium is caused by extrusion via this protein which plays a key role in the process of light adaptation. This chain is Sodium/potassium/calcium exchanger 1 (SLC24A1), found in Gallus gallus (Chicken).